The primary structure comprises 814 residues: Rho GTPase-activating protein 44 (814 aa).

One can recognise a BAR domain in the interval Q14–E249. Residues K255–F445 enclose the Rho-GAP domain. Disordered regions lie at residues A467–S493, S531–T768, and S784–L814. The segment covering P479–R489 has biased composition (basic and acidic residues). Position 493 is a phosphoserine (S493). Composition is skewed to low complexity over residues S531–P541, S567–S581, S598–G612, P622–P637, S684–A704, and S741–T752. Residues K727 to L814 are interaction with BST2. The span at P790–S805 shows a compositional bias: basic and acidic residues. The residue at position 805 (S805) is a Phosphoserine. The PDZ-binding signature appears at S811–L814.

In terms of assembly, interacts with BST2 (via cytoplasmic domain). Interacts (probably via PDZ-binding motif) with SHANK3 (via PDZ domain); the interaction takes place in dendritic spines and promotes GRIA1 exocytosis. Expressed in brain, detected at high levels in hippocampal CA1 (at protein level).

It localises to the cell projection. The protein localises to the dendritic spine. Its subcellular location is the recycling endosome. It is found in the presynapse. The protein resides in the dendrite. Its function is as follows. GTPase-activating protein (GAP) that stimulates the GTPase activity of Rho-type GTPases. Thereby, controls Rho-type GTPases cycling between their active GTP-bound and inactive GDP-bound states. Acts as a GAP at least for CDC42 and RAC1. In neurons, is involved in dendritic spine formation and synaptic plasticity in a specific RAC1-GAP activity. Limits the initiation of exploratory dendritic filopodia. Recruited to actin-patches that seed filopodia, binds specifically to plasma membrane sections that are deformed inward by acto-myosin mediated contractile forces. Acts through GAP activity on RAC1 to reduce actin polymerization necessary for filopodia formation. In association with SHANK3, promotes GRIA1 exocytosis from recycling endosomes and spine morphological changes associated to long-term potentiation. This chain is Rho GTPase-activating protein 44, found in Rattus norvegicus (Rat).